Consider the following 305-residue polypeptide: UDP-3-O-acyl-N-acetylglucosamine deacetylase (305 aa).

His78, His237, and Asp241 together coordinate Zn(2+). The active-site Proton donor is the His264.

Belongs to the LpxC family. It depends on Zn(2+) as a cofactor.

The enzyme catalyses a UDP-3-O-[(3R)-3-hydroxyacyl]-N-acetyl-alpha-D-glucosamine + H2O = a UDP-3-O-[(3R)-3-hydroxyacyl]-alpha-D-glucosamine + acetate. It participates in glycolipid biosynthesis; lipid IV(A) biosynthesis; lipid IV(A) from (3R)-3-hydroxytetradecanoyl-[acyl-carrier-protein] and UDP-N-acetyl-alpha-D-glucosamine: step 2/6. In terms of biological role, catalyzes the hydrolysis of UDP-3-O-myristoyl-N-acetylglucosamine to form UDP-3-O-myristoylglucosamine and acetate, the committed step in lipid A biosynthesis. The polypeptide is UDP-3-O-acyl-N-acetylglucosamine deacetylase (Paraburkholderia phytofirmans (strain DSM 17436 / LMG 22146 / PsJN) (Burkholderia phytofirmans)).